A 389-amino-acid chain; its full sequence is Gastricsin (389 aa).

The N-terminal stretch at 1–16 (MKWMVVVLLCLQLLEA) is a signal peptide. Positions 17-59 (KVVKVPLKKLKSLRETMKEKGLLEEFLKNHKYDPAQKYRYTDF) are cleaved as a propeptide — activation peptide. A Peptidase A1 domain is found at 73–386 (YFGEISIGTP…DMGNNRVGFA (314 aa)). Residue Asp91 is part of the active site. Intrachain disulfides connect Cys104–Cys109 and Cys268–Cys272. Asp277 is an active-site residue. Cys311 and Cys344 form a disulfide bridge.

Belongs to the peptidase A1 family.

Its subcellular location is the secreted. It carries out the reaction More restricted specificity than pepsin A, but shows preferential cleavage at Tyr-|-Xaa bonds. High activity on hemoglobin.. Hydrolyzes a variety of proteins. The chain is Gastricsin (PGC) from Rhinolophus ferrumequinum (Greater horseshoe bat).